Consider the following 122-residue polypeptide: Large ribosomal subunit protein uL14 (122 aa).

The protein belongs to the universal ribosomal protein uL14 family. As to quaternary structure, part of the 50S ribosomal subunit. Forms a cluster with proteins L3 and L19. In the 70S ribosome, L14 and L19 interact and together make contacts with the 16S rRNA in bridges B5 and B8.

Functionally, binds to 23S rRNA. Forms part of two intersubunit bridges in the 70S ribosome. In Coxiella burnetii (strain RSA 331 / Henzerling II), this protein is Large ribosomal subunit protein uL14.